The following is a 269-amino-acid chain: Alcohol dehydrogenase-related 31 kDa protein (269 aa).

11 to 34 (YVADCGGIALETCKVLMTKNIAKL) lines the NAD(+) pocket. Residue S139 coordinates substrate. Y152 (proton acceptor) is an active-site residue.

Belongs to the short-chain dehydrogenases/reductases (SDR) family.

The polypeptide is Alcohol dehydrogenase-related 31 kDa protein (Adhr) (Drosophila lebanonensis (Fruit fly)).